Here is a 194-residue protein sequence, read N- to C-terminus: Dephospho-CoA kinase (194 aa).

The 192-residue stretch at 3–194 folds into the DPCK domain; it reads IVGLTGSIGM…RAIVDDLRAG (192 aa). Residue 11-16 participates in ATP binding; sequence GMGKST.

This sequence belongs to the CoaE family.

The protein resides in the cytoplasm. The catalysed reaction is 3'-dephospho-CoA + ATP = ADP + CoA + H(+). Its pathway is cofactor biosynthesis; coenzyme A biosynthesis; CoA from (R)-pantothenate: step 5/5. In terms of biological role, catalyzes the phosphorylation of the 3'-hydroxyl group of dephosphocoenzyme A to form coenzyme A. The polypeptide is Dephospho-CoA kinase (Rhizobium meliloti (strain 1021) (Ensifer meliloti)).